We begin with the raw amino-acid sequence, 1856 residues long: Zinc metalloprotease ZmpC (1856 aa).

A signal peptide spans 1 to 42; the sequence is MSRKSIGEKRHSFSMRKLSVGLVSVTVSSFFLMSQGIQSVSA. The propeptide occupies 43-95; that stretch reads DNMESPIHYKYMTEGKLTDEEKSLLVEALPQLAEESDDTYYLVYRSQQFLPNT. An LPXTG sorting signal motif is present at residues 92-96; that stretch reads LPNTG. Position 95 is a pentaglycyl murein peptidoglycan amidated threonine (Thr-95). The next 2 membrane-spanning stretches (helical) occupy residues 97 to 117 and 130 to 152; these read FNPT…VLLV and FLLL…TSQI. Over 153 to 1856 the chain is Extracellular; sequence LSAYNSQLSI…TDDFRNSIYK (1704 aa). 2 stretches are compositionally biased toward polar residues: residues 254–267 and 286–295; these read NLSS…QVEQ and NPVSATTVQS. Residues 254–362 are disordered; that stretch reads NLSSNDSFAS…GEAAVREEEP (109 aa). 2 stretches are compositionally biased toward basic and acidic residues: residues 322 to 334 and 351 to 361; these read PGHE…REDL and HEGEAAVREEE. The G5 domain maps to 417–496; the sequence is ALEVTTRNRT…NEVVKVGTLV (80 aa). Residue His-1502 participates in Zn(2+) binding. Glu-1503 is an active-site residue. Zn(2+) is bound by residues His-1506 and Glu-1526.

The protein belongs to the peptidase M26 family. The cofactor is Zn(2+). In terms of processing, the Gram-positive cell-wall anchor motif LPXTG is located in the N-terminal part, in contrast to such motifs in other known streptococcal and staphylococcal proteins. The protease could be cleaved by the sortase and anchored in the membrane via the two potential N-terminal transmembrane domains, whereas the propeptide located prior to the LPXTG motif would remain attached to the cell wall peptidoglycan by an amide bond.

The protein localises to the secreted. Its subcellular location is the cell wall. The protein resides in the membrane. Functionally, zinc metalloproteinase that specifically cleaves human matrix metalloproteinase 9 (MMP-9), leading to its activation. May play a role in pneumococcal virulence and pathogenicity in the lung. The polypeptide is Zinc metalloprotease ZmpC (zmpC) (Streptococcus pneumoniae serotype 4 (strain ATCC BAA-334 / TIGR4)).